Here is a 466-residue protein sequence, read N- to C-terminus: Cysteine--tRNA ligase (466 aa).

Position 28 (Cys28) interacts with Zn(2+). The 'HIGH' region signature appears at 30–40 (PTVYNYIHIGN). The Zn(2+) site is built by Cys208, His233, and Glu237. The 'KMSKS' region motif lies at 265–269 (KMSKS). ATP is bound at residue Lys268.

Belongs to the class-I aminoacyl-tRNA synthetase family. Monomer. Zn(2+) is required as a cofactor.

The protein localises to the cytoplasm. It carries out the reaction tRNA(Cys) + L-cysteine + ATP = L-cysteinyl-tRNA(Cys) + AMP + diphosphate. In Staphylococcus aureus (strain Mu3 / ATCC 700698), this protein is Cysteine--tRNA ligase.